Here is a 1496-residue protein sequence, read N- to C-terminus: DNA-directed RNA polymerase subunit beta' (1496 aa).

Residues Cys-70, Cys-72, Cys-85, and Cys-88 each coordinate Zn(2+). The Mg(2+) site is built by Asp-461, Asp-463, and Asp-465. The Zn(2+) site is built by Cys-908, Cys-982, Cys-989, and Cys-992. The segment at 1467–1496 (DKDMQVEGESEVPAIPPVAEGSAPEAPPAE) is disordered.

The protein belongs to the RNA polymerase beta' chain family. The RNAP catalytic core consists of 2 alpha, 1 beta, 1 beta' and 1 omega subunit. When a sigma factor is associated with the core the holoenzyme is formed, which can initiate transcription. Requires Mg(2+) as cofactor. The cofactor is Zn(2+).

The enzyme catalyses RNA(n) + a ribonucleoside 5'-triphosphate = RNA(n+1) + diphosphate. Its function is as follows. DNA-dependent RNA polymerase catalyzes the transcription of DNA into RNA using the four ribonucleoside triphosphates as substrates. This Paramagnetospirillum magneticum (strain ATCC 700264 / AMB-1) (Magnetospirillum magneticum) protein is DNA-directed RNA polymerase subunit beta'.